The following is a 252-amino-acid chain: Ribosomal RNA small subunit methyltransferase J (252 aa).

Residues 101–102 (RD), 117–118 (ER), 153–154 (SS), and Asp171 each bind S-adenosyl-L-methionine.

It belongs to the methyltransferase superfamily. RsmJ family.

The protein resides in the cytoplasm. It catalyses the reaction guanosine(1516) in 16S rRNA + S-adenosyl-L-methionine = N(2)-methylguanosine(1516) in 16S rRNA + S-adenosyl-L-homocysteine + H(+). Specifically methylates the guanosine in position 1516 of 16S rRNA. In Salmonella dublin (strain CT_02021853), this protein is Ribosomal RNA small subunit methyltransferase J.